A 149-amino-acid polypeptide reads, in one-letter code: 3-dehydroquinate dehydratase (149 aa).

Y26 acts as the Proton acceptor in catalysis. Substrate-binding residues include N77, H83, and D90. H103 serves as the catalytic Proton donor. Residues 104 to 105 (LS) and R114 each bind substrate.

It belongs to the type-II 3-dehydroquinase family. As to quaternary structure, homododecamer.

The catalysed reaction is 3-dehydroquinate = 3-dehydroshikimate + H2O. It participates in metabolic intermediate biosynthesis; chorismate biosynthesis; chorismate from D-erythrose 4-phosphate and phosphoenolpyruvate: step 3/7. Functionally, catalyzes a trans-dehydration via an enolate intermediate. This is 3-dehydroquinate dehydratase from Vibrio parahaemolyticus serotype O3:K6 (strain RIMD 2210633).